The sequence spans 90 residues: Secretoglobin family 1D member 1 (90 aa).

A signal peptide spans 1–21 (MRLSVCLLLLTLALCCYRANA).

In terms of assembly, heterodimer of a lipophilin A and a lipophilin C (mammaglobin B) monomer associated head to head. Expressed in lachrymal gland, thymus, kidney, testis, ovary and salivary gland.

The protein localises to the secreted. Functionally, may bind androgens and other steroids, may also bind estramustine, a chemotherapeutic agent used for prostate cancer. May be under transcriptional regulation of steroid hormones. The protein is Secretoglobin family 1D member 1 (SCGB1D1) of Homo sapiens (Human).